A 534-amino-acid polypeptide reads, in one-letter code: Probable alkaline/neutral invertase D (534 aa).

Ser-7 and Ser-37 each carry phosphoserine. Phosphothreonine is present on Thr-55. At Ser-532 the chain carries Phosphoserine.

This sequence belongs to the glycosyl hydrolase 100 family.

It carries out the reaction Hydrolysis of terminal non-reducing beta-D-fructofuranoside residues in beta-D-fructofuranosides.. Invertase that cleaves sucrose into glucose and fructose. This chain is Probable alkaline/neutral invertase D, found in Arabidopsis thaliana (Mouse-ear cress).